The following is a 229-amino-acid chain: Potassium/proton antiporter CemA (229 aa).

3 consecutive transmembrane segments (helical) span residues 7–27 (FTPL…SFSV), 107–127 (ILHF…SILG), and 189–209 (IISG…KYWI).

Belongs to the CemA family.

Its subcellular location is the plastid. It localises to the chloroplast inner membrane. It catalyses the reaction K(+)(in) + H(+)(out) = K(+)(out) + H(+)(in). Functionally, contributes to K(+)/H(+) antiport activity by supporting proton efflux to control proton extrusion and homeostasis in chloroplasts in a light-dependent manner to modulate photosynthesis. Prevents excessive induction of non-photochemical quenching (NPQ) under continuous-light conditions. Indirectly promotes efficient inorganic carbon uptake into chloroplasts. This is Potassium/proton antiporter CemA from Atropa belladonna (Belladonna).